Here is a 1514-residue protein sequence, read N- to C-terminus: Neurexin-1 (1514 aa).

A signal peptide spans 1–30; the sequence is MGTALVQRGGCCLLCLSLLLLGCWAELGSG. A Laminin G-like 1 domain is found at 31 to 217; it reads LEFPGAEGQW…PPNSGGGSPC (187 aa). Residues 31–1438 are Extracellular-facing; the sequence is LEFPGAEGQW…EVIRESSSTT (1408 aa). Residues Asn125 and Asn190 are each glycosylated (N-linked (GlcNAc...) asparagine). The disordered stretch occupies residues 197-221; sequence VDGGEVKLDDEPPNSGGGSPCEAGE. The region spanning 219–256 is the EGF-like 1 domain; sequence AGEEGEGGVCLNGGVCSVVDDQAVCDCSRTGFRGKDCS. Intrachain disulfides connect Cys228/Cys243 and Cys245/Cys255. Laminin G-like domains are found at residues 283–480 and 487–679; these read IATF…AFKC and DPIT…KPSC. Asp329, Leu346, and Met414 together coordinate Ca(2+). 5 disulfide bridges follow: Cys444–Cys480, Cys650–Cys679, Cys687–Cys698, Cys692–Cys707, and Cys709–Cys719. Positions 683–720 constitute an EGF-like 2 domain; the sequence is TAKPCLSNPCKNNGMCRDGWNRYVCDCSGTGYLGRSCE. 2 Laminin G-like domains span residues 725–898 and 912–1087; these read VLSY…IDYC and DPVT…ERGC. Ca(2+) contacts are provided by Asp772 and Leu789. Asn797 is a glycosylation site (N-linked (GlcNAc...) asparagine). Position 848 (Arg848) interacts with Ca(2+). 5 disulfide bridges follow: Cys890-Cys898, Cys1059-Cys1087, Cys1094-Cys1105, Cys1099-Cys1114, and Cys1116-Cys1126. In terms of domain architecture, EGF-like 3 spans 1090–1127; the sequence is PSTTCQEDSCSNQGVCLQQWDGFSCDCSMTSFSGPLCN. The region spanning 1133 to 1331 is the Laminin G-like 6 domain; the sequence is YIFSKGGGQI…DANIAIVGNV (199 aa). Residues Asp1183 and Val1200 each contribute to the Ca(2+) site. An N-linked (GlcNAc...) asparagine glycan is attached at Asn1230. Residues Ile1282 and Asn1284 each coordinate Ca(2+). O-linked (Xyl...) (heparan sulfate) serine glycosylation is present at Ser1392. The segment at 1396 to 1427 is disordered; that stretch reads PSDDEDIDPCEPSSGGLANPTRVGGREPYPGS. The chain crosses the membrane as a helical span at residues 1439–1459; the sequence is GMVVGIVAAAALCILILLYAM. Topologically, residues 1460 to 1514 are cytoplasmic; it reads YKYRNRDEGSYHVDESRNYISNSAQSNGAVVKEKQPSSAKSANKNKKNKDKEYYV. The interval 1481–1507 is interaction with CASK; that stretch reads NSAQSNGAVVKEKQPSSAKSANKNKKN. Residues 1481 to 1514 are disordered; the sequence is NSAQSNGAVVKEKQPSSAKSANKNKKNKDKEYYV.

Belongs to the neurexin family. As to quaternary structure, interacts (via laminin G-like domain 2 and/or laminin G-like domain 6) with NLGN1 forming a heterotetramer, where one NLGN1 dimer interacts with one NRXN1 dimer. Also interacts (via laminin G-like domain 2 and/or laminin G-like domain 6) with NLGN2, NLGN3 and NLGN4L; interactions with NLGN1, NLGN2, NLGN3 and NLGN4L are calcium-dependent. Interacts (via cytoplasmic C-terminal region) with CASK (via the PDZ, SH3 and guanylate kinase-like domains). Interacts (via cytoplasmic C-terminus) with CASKIN1 and APBA1. Interacts (via laminin G-like domain 2) with NXPH1 and NXPH3. Alpha-type isoforms (neurexin-1-alpha) interact (via laminin G-like domain 2 and/or laminin G-like domain 6) with DAG1 (via alpha-dystroglycan chain). Interacts with LRRTM1, LRRTM2, LRRTM3 and LRRTM4. Interacts with SYT13 and SYTL1. Interacts with CBLN1, CBLN2 and, less avidly, with CBLN4. Interacts with CLSTN3. O-glycosylated; contains heparan sulfate. Heparan sulfate attachment is required for synapse development by mediating interactions with neuroligins and LRRTM2.

The protein localises to the presynaptic cell membrane. Its function is as follows. Cell surface protein involved in cell-cell-interactions, exocytosis of secretory granules and regulation of signal transmission. Function is isoform-specific. Alpha-type isoforms have a long N-terminus with six laminin G-like domains and play an important role in synaptic signal transmission. Alpha-type isoforms play a role in the regulation of calcium channel activity and Ca(2+)-triggered neurotransmitter release at synapses and at neuromuscular junctions. They play an important role in Ca(2+)-triggered exocytosis of secretory granules in pituitary gland. They may affect their functions at synapses and in endocrine cells via their interactions with proteins from the exocytotic machinery. Likewise, alpha-type isoforms play a role in regulating the activity of postsynaptic NMDA receptors, a subtype of glutamate-gated ion channels. Both alpha-type and beta-type isoforms may play a role in the formation or maintenance of synaptic junctions via their interactions (via the extracellular domains) with neuroligin family members, CBLN1 or CBLN2. In vitro, triggers the de novo formation of presynaptic structures. May be involved in specification of excitatory synapses. Alpha-type isoforms were first identified as receptors for alpha-latrotoxin from spider venom. This chain is Neurexin-1 (Nrxn1), found in Mus musculus (Mouse).